We begin with the raw amino-acid sequence, 647 residues long: Sialidase (647 aa).

Positions 1-37 (MTANPYLRRLPRRRAVSFLLAPALAAATVAGASPAQA) are cleaved as a signal peptide. Residue Arg-68 participates in substrate binding. Asp-92 serves as the catalytic Proton acceptor. 3 BNR repeats span residues 102-113 (RRSTDGGRTWGE), 175-186 (ATSTDGGLTWSH), and 239-250 (VYSDDHGRTWRA). The active-site Nucleophile is Glu-260. Arg-276 contributes to the substrate binding site. BNR repeat units lie at residues 287–298 (AVSTDGGHSYGP) and 348–359 (RMSCDDGQTWPV). The Nucleophile role is filled by Tyr-370. The F5/8 type C domain maps to 496–646 (TFTVTVGLLD…AVAELEVEGQ (151 aa)).

It belongs to the glycosyl hydrolase 33 family.

Its subcellular location is the secreted. The enzyme catalyses Hydrolysis of alpha-(2-&gt;3)-, alpha-(2-&gt;6)-, alpha-(2-&gt;8)- glycosidic linkages of terminal sialic acid residues in oligosaccharides, glycoproteins, glycolipids, colominic acid and synthetic substrates.. Functionally, to release sialic acids for use as carbon and energy sources for this non-pathogenic bacterium while in pathogenic microorganisms, sialidases have been suggested to be pathogenic factors. The sequence is that of Sialidase (nedA) from Micromonospora viridifaciens.